The following is a 71-amino-acid chain: MNMKTVKCPTCGKPVPWTPESRYRPFCSERCKQIDLGAWAAEQYTIPVVEDDDLPPDAPGGESGGASGRLN.

The Zn(2+) site is built by C8, C11, C27, and C31. A disordered region spans residues 48 to 71 (VVEDDDLPPDAPGGESGGASGRLN). Over residues 61 to 71 (GESGGASGRLN) the composition is skewed to gly residues.

Belongs to the DNA gyrase inhibitor YacG family. Interacts with GyrB. Zn(2+) serves as cofactor.

Its function is as follows. Inhibits all the catalytic activities of DNA gyrase by preventing its interaction with DNA. Acts by binding directly to the C-terminal domain of GyrB, which probably disrupts DNA binding by the gyrase. This is DNA gyrase inhibitor YacG from Ralstonia nicotianae (strain ATCC BAA-1114 / GMI1000) (Ralstonia solanacearum).